A 683-amino-acid polypeptide reads, in one-letter code: Solute carrier family 28 member 3 (683 aa).

The interval 1-71 (MSAFKARGVE…EEEEEGEEDQ (71 aa)) is disordered. Residues 1–97 (MSAFKARGVE…FYKRNKKIIH (97 aa)) are Cytoplasmic-facing. The span at 60–71 (DNEEEEEGEEDQ) shows a compositional bias: acidic residues. Residues 98–118 (YTFLGLLLVGYFALVIAACIV) traverse the membrane as a helical segment. The Extracellular segment spans residues 119-123 (NFKQS). The chain crosses the membrane as a helical span at residues 124–144 (LALLVLTLIAIFFFFWDLFIA). At 145-168 (KYGDKIAEALKPCQKFLDNHWSII) the chain is on the cytoplasmic side. A helical membrane pass occupies residues 169–189 (RWFVYGALLLAVILWLTLDTA). Residues 190 to 192 (KRG) lie on the Extracellular side of the membrane. The helical transmembrane segment at 193–214 (ANQVIPFFGLILYILLVFIFSK) threads the bilayer. Residues 215-222 (HPTKVRWR) lie on the Cytoplasmic side of the membrane. The helical transmembrane segment at 223–242 (IVIWGLLLQFIFGLIILRTK) threads the bilayer. Over 243 to 279 (PGLDAFNWLGIQVQTFLKYTDAGSRFLFGDDFQDHFF) the chain is Extracellular. The helical transmembrane segment at 280–300 (AFAVLPIVIFFSTVMSMMYYL) threads the bilayer. The Cytoplasmic portion of the chain corresponds to 301 to 324 (GLMQWLILKVGWLMQITMGTSPME). The helical intramembrane region spans 325-343 (SMVSAGNIFVGQTESPLLI). Residues 344-356 (RPYLADLTISEMH) are Cytoplasmic-facing. Residues 357-379 (SVMSSGFATIAGSVLGAYISLGI) form a helical membrane-spanning segment. The Extracellular portion of the chain corresponds to 380–381 (PA). A helical membrane pass occupies residues 382 to 403 (AHLLTASVMSAPAALAISKTFW). At 404 to 438 (PETKKSKNSTQTSIKLEKGQENNLVEAASQGASAA) the chain is on the cytoplasmic side. A helical transmembrane segment spans residues 439-464 (VPLVANIAANLIAFLAVLAFINATLS). Residues 465–502 (WLGSMFNYPQFSFEIICSYVLMPFAFMMGVNYDDSFLV) are Extracellular-facing. The helical intramembrane region spans 503-522 (AELLGMKTFFNEFVAYQRLS). Over 523-561 (EYIHNRESGGPLFVDGVRQYMSVRSEAIATYALCGFANF) the chain is Extracellular. Residues 562–572 (GSLGIMIGGLS) traverse the membrane as a helical segment. The Cytoplasmic portion of the chain corresponds to 573–585 (SLAPHRKSDIASC). A helical transmembrane segment spans residues 586-608 (GIRALIAGTIACFSTACIAGVLY). The Extracellular segment spans residues 609-683 (IPELYCPNLL…GFNCSEVRPE (75 aa)).

Belongs to the concentrative nucleoside transporter (CNT) (TC 2.A.41) family. In terms of assembly, homotrimer.

The protein localises to the cell membrane. It carries out the reaction thymidine(out) + 2 Na(+)(out) = thymidine(in) + 2 Na(+)(in). It catalyses the reaction cytidine(out) + 2 Na(+)(out) = cytidine(in) + 2 Na(+)(in). The enzyme catalyses uridine(out) + 2 Na(+)(out) = uridine(in) + 2 Na(+)(in). The catalysed reaction is adenosine(out) + 2 Na(+)(out) = adenosine(in) + 2 Na(+)(in). It carries out the reaction guanosine(out) + 2 Na(+)(out) = guanosine(in) + 2 Na(+)(in). It catalyses the reaction inosine(out) + 2 Na(+)(out) = inosine(in) + 2 Na(+)(in). Its function is as follows. Sodium-dependent, pyrimidine- and purine-selective. Involved in the homeostasis of endogenous nucleosides. Exhibits the transport characteristics of the nucleoside transport system cib or N3 subtype (N3/cib) (with marked transport of both thymidine and inosine). Employs a 2:1 sodium/nucleoside ratio. Also able to transport gemcitabine, 3'-azido-3'-deoxythymidine (AZT), ribavirin and 3-deazauridine. The protein is Solute carrier family 28 member 3 (SLC28A3) of Eptatretus stoutii (Pacific hagfish).